A 389-amino-acid polypeptide reads, in one-letter code: S-adenosylmethionine synthase (389 aa).

Histidine 15 provides a ligand contact to ATP. A Mg(2+)-binding site is contributed by aspartate 17. Glutamate 43 provides a ligand contact to K(+). Positions 56 and 99 each coordinate L-methionine. The segment at 99 to 109 is flexible loop; sequence QSPDIAQGVNE. ATP-binding positions include 166-168, 234-235, aspartate 243, 249-250, alanine 266, and lysine 270; these read DAK, RF, and RK. Aspartate 243 is a binding site for L-methionine. Residue lysine 274 participates in L-methionine binding.

Belongs to the AdoMet synthase family. In terms of assembly, homotetramer; dimer of dimers. The cofactor is Mg(2+). Requires K(+) as cofactor.

The protein resides in the cytoplasm. The enzyme catalyses L-methionine + ATP + H2O = S-adenosyl-L-methionine + phosphate + diphosphate. The protein operates within amino-acid biosynthesis; S-adenosyl-L-methionine biosynthesis; S-adenosyl-L-methionine from L-methionine: step 1/1. Its function is as follows. Catalyzes the formation of S-adenosylmethionine (AdoMet) from methionine and ATP. The overall synthetic reaction is composed of two sequential steps, AdoMet formation and the subsequent tripolyphosphate hydrolysis which occurs prior to release of AdoMet from the enzyme. In Laribacter hongkongensis (strain HLHK9), this protein is S-adenosylmethionine synthase.